The chain runs to 993 residues: Glycine dehydrogenase (decarboxylating) (993 aa).

Position 715 is an N6-(pyridoxal phosphate)lysine (Lys-715).

This sequence belongs to the GcvP family. The glycine cleavage system is composed of four proteins: P, T, L and H. Requires pyridoxal 5'-phosphate as cofactor.

The catalysed reaction is N(6)-[(R)-lipoyl]-L-lysyl-[glycine-cleavage complex H protein] + glycine + H(+) = N(6)-[(R)-S(8)-aminomethyldihydrolipoyl]-L-lysyl-[glycine-cleavage complex H protein] + CO2. In terms of biological role, the glycine cleavage system catalyzes the degradation of glycine. The P protein binds the alpha-amino group of glycine through its pyridoxal phosphate cofactor; CO(2) is released and the remaining methylamine moiety is then transferred to the lipoamide cofactor of the H protein. The polypeptide is Glycine dehydrogenase (decarboxylating) (Xylella fastidiosa (strain Temecula1 / ATCC 700964)).